A 487-amino-acid chain; its full sequence is MVSQVVAEEKPQLLSKKAGCNSHGQDSSYFLGWQEYEKNPFDPVSNPSGIIQMGLAENQLSFDLLEEWLEKNPHALGLRREGGGASVFRELALFQDYHGLPAFKNALARFMSEQRGYKVVFDPSNIVLTAGATSANEALMFCLADHGDAFLIPTPYYPGFDRDLKWRTGAEIVPVHCASANGFRVTRPALDDAYRRAQKRRLRVKGVLITNPSNPLGTASPRADLETIVDFVAAKGIHLISDEIYAGTAFAEPPAGFVSALEVVAGRDGGGADVSDRVHVVYSLSKDLGLPGFRVGAIYSANAAVVSAATKMSSFGLVSSQTQYLLAALLGDRDFTRSYVAENKRRIKERHDQLVDGLREIGIGCLPSNAGLFCWVDMSHLMRSRSFAGEMELWKKVVFEVGLNISPGSSCHCREPGWFRVCFANMSAKTLDVAMQRLRSFVDSATGGGDNAALRRAAVPVRSVSCPLAIKWALRLTPSIADRKAER.

Lys-286 carries the post-translational modification N6-(pyridoxal phosphate)lysine.

Belongs to the class-I pyridoxal-phosphate-dependent aminotransferase family. As to quaternary structure, homodimer. Requires pyridoxal 5'-phosphate as cofactor.

The enzyme catalyses S-adenosyl-L-methionine = 1-aminocyclopropane-1-carboxylate + S-methyl-5'-thioadenosine + H(+). It functions in the pathway alkene biosynthesis; ethylene biosynthesis via S-adenosyl-L-methionine; ethylene from S-adenosyl-L-methionine: step 1/2. Functionally, catalyzes the formation of 1-aminocyclopropane-1-carboxylate, a direct precursor of ethylene in higher plants. This chain is 1-aminocyclopropane-1-carboxylate synthase 1 (ACC1), found in Oryza sativa subsp. indica (Rice).